The primary structure comprises 546 residues: Pyrophosphate--fructose 6-phosphate 1-phosphotransferase (546 aa).

G80 contacts diphosphate. D174 contributes to the Mg(2+) binding site. Substrate is bound by residues 202–204 (TID), 241–242 (KY), 249–251 (MGR), E310, and 420–423 (YEGR). The active-site Proton acceptor is D204.

This sequence belongs to the phosphofructokinase type A (PFKA) family. PPi-dependent PFK group II subfamily. Clade 'Long' sub-subfamily. In terms of assembly, homodimer. Requires Mg(2+) as cofactor. The cofactor is Mn(2+).

Its subcellular location is the cytoplasm. It catalyses the reaction beta-D-fructose 6-phosphate + diphosphate = beta-D-fructose 1,6-bisphosphate + phosphate + H(+). The protein operates within carbohydrate degradation; glycolysis; D-glyceraldehyde 3-phosphate and glycerone phosphate from D-glucose: step 3/4. With respect to regulation, non-allosteric. Competitively inhibited by PPi, Pi and fructose 1,6-bisphosphate. Catalyzes the phosphorylation of D-fructose 6-phosphate, the first committing step of glycolysis. Uses inorganic phosphate (PPi) as phosphoryl donor instead of ATP like common ATP-dependent phosphofructokinases (ATP-PFKs), which renders the reaction reversible, and can thus function both in glycolysis and gluconeogenesis. Consistently, PPi-PFK can replace the enzymes of both the forward (ATP-PFK) and reverse (fructose-bisphosphatase (FBPase)) reactions. This chain is Pyrophosphate--fructose 6-phosphate 1-phosphotransferase, found in Entamoeba histolytica (strain ATCC 30459 / HM-1:IMSS / ABRM).